The following is a 388-amino-acid chain: Xylose isomerase (388 aa).

Catalysis depends on residues His-54 and Asp-57. Glu-181, Glu-217, His-220, Asp-245, Asp-255, Asp-257, and Asp-287 together coordinate Mg(2+).

Belongs to the xylose isomerase family. Homotetramer. Requires Mg(2+) as cofactor.

It localises to the cytoplasm. It carries out the reaction alpha-D-xylose = alpha-D-xylulofuranose. Functionally, involved in D-xylose catabolism. The chain is Xylose isomerase (xylA) from Streptomyces rubiginosus.